The following is a 459-amino-acid chain: Argininosuccinate lyase (459 aa).

Belongs to the lyase 1 family. Argininosuccinate lyase subfamily.

The protein resides in the cytoplasm. The catalysed reaction is 2-(N(omega)-L-arginino)succinate = fumarate + L-arginine. The protein operates within amino-acid biosynthesis; L-arginine biosynthesis; L-arginine from L-ornithine and carbamoyl phosphate: step 3/3. The polypeptide is Argininosuccinate lyase (Prochlorococcus marinus (strain AS9601)).